We begin with the raw amino-acid sequence, 348 residues long: MANYTPAPEDDYDVFIEDDLSDDEIEPCTPYDPKILSAQLVPYLYTTVFMVGLLDNILVVFILVKYKGLRQAENMSFLNLALSNLGFLLTLPFWAYAASHGEGFDDPLCKILLLLYSIGLYSEAFFNVLLTVQRYKEFFHVRRRFSACRTVAGSIFISVLVWVTATLVTLPELVSYKPQMQSQKYKCFFTGLHFLPADETFWKHFLTLKMNILGFLLPLFAFVYCYVRMRKTLQFRERNYGLFKLVFTIMAVFLLMWGPYNIVLFLSAFNEHFSLHGCGSSYNLNKSVQITRIIAATHCCVNPLLYVFLDKAFRKHLCHLFYLCSDTAPQPTEEPAQGASGEEYHLSS.

Topologically, residues 1–43 (MANYTPAPEDDYDVFIEDDLSDDEIEPCTPYDPKILSAQLVPY) are extracellular. A helical transmembrane segment spans residues 44–64 (LYTTVFMVGLLDNILVVFILV). At 65–76 (KYKGLRQAENMS) the chain is on the cytoplasmic side. A helical transmembrane segment spans residues 77–97 (FLNLALSNLGFLLTLPFWAYA). The Extracellular portion of the chain corresponds to 98–110 (ASHGEGFDDPLCK). Cys109 and Cys187 are disulfide-bonded. Residues 111–131 (ILLLLYSIGLYSEAFFNVLLT) traverse the membrane as a helical segment. The Cytoplasmic portion of the chain corresponds to 132–150 (VQRYKEFFHVRRRFSACRT). Residues 151 to 171 (VAGSIFISVLVWVTATLVTLP) form a helical membrane-spanning segment. Residues 172–204 (ELVSYKPQMQSQKYKCFFTGLHFLPADETFWKH) are Extracellular-facing. A helical membrane pass occupies residues 205–225 (FLTLKMNILGFLLPLFAFVYC). Residues 226–244 (YVRMRKTLQFRERNYGLFK) are Cytoplasmic-facing. A helical membrane pass occupies residues 245–265 (LVFTIMAVFLLMWGPYNIVLF). Residues 266–292 (LSAFNEHFSLHGCGSSYNLNKSVQITR) are Extracellular-facing. Asn285 carries an N-linked (GlcNAc...) asparagine glycan. A helical membrane pass occupies residues 293-313 (IIAATHCCVNPLLYVFLDKAF). At 314–348 (RKHLCHLFYLCSDTAPQPTEEPAQGASGEEYHLSS) the chain is on the cytoplasmic side.

The protein belongs to the G-protein coupled receptor 1 family.

The protein resides in the cell membrane. Receptor for CCL19 and chemerin/RARRES2. Does not appear to be a signaling receptor, but may have a role in modulating chemokine-triggered immune responses by capturing and internalizing CCL19 or by presenting RARRES2 ligand to CMKLR1, a functional signaling receptor. Plays a critical role for the development of Th2 responses. This chain is Chemokine C-C motif receptor-like 2 (CCRL2), found in Bos taurus (Bovine).